The following is a 169-amino-acid chain: Ribosome maturation factor RimM (169 aa).

In terms of domain architecture, PRC barrel spans 95–169 (EDGYYWTDLI…QITVDWELGY (75 aa)).

Belongs to the RimM family. As to quaternary structure, binds ribosomal protein uS19.

The protein resides in the cytoplasm. Functionally, an accessory protein needed during the final step in the assembly of 30S ribosomal subunit, possibly for assembly of the head region. Essential for efficient processing of 16S rRNA. May be needed both before and after RbfA during the maturation of 16S rRNA. It has affinity for free ribosomal 30S subunits but not for 70S ribosomes. The polypeptide is Ribosome maturation factor RimM (Nitrosomonas europaea (strain ATCC 19718 / CIP 103999 / KCTC 2705 / NBRC 14298)).